A 96-amino-acid polypeptide reads, in one-letter code: MSIRPLHDRVVIQRLEEERTSPGGIVIPDTAAEKPMKGKVIAVGHGKTLDNGERRPVEVNVGDQVLFGKYAGTEVKIDGQDYLVMREDDIMAVFEG.

It belongs to the GroES chaperonin family. As to quaternary structure, heptamer of 7 subunits arranged in a ring. Interacts with the chaperonin GroEL.

The protein localises to the cytoplasm. In terms of biological role, together with the chaperonin GroEL, plays an essential role in assisting protein folding. The GroEL-GroES system forms a nano-cage that allows encapsulation of the non-native substrate proteins and provides a physical environment optimized to promote and accelerate protein folding. GroES binds to the apical surface of the GroEL ring, thereby capping the opening of the GroEL channel. The protein is Co-chaperonin GroES of Halorhodospira halophila (strain DSM 244 / SL1) (Ectothiorhodospira halophila (strain DSM 244 / SL1)).